A 1068-amino-acid polypeptide reads, in one-letter code: Ubiquitin-protein ligase E3B (1068 aa).

Met1 carries the N-acetylmethionine modification. In terms of domain architecture, IQ spans 29–58 (RERAAVVIQAHVRSFLCRSRLQRDIRREID). Position 419 is a phosphoserine (Ser419). Residues 702–1068 (SQHAMKGVIR…ISMNTGFELS (367 aa)) form the HECT domain. Cys1036 (glycyl thioester intermediate) is an active-site residue.

Widely expressed.

Its subcellular location is the postsynaptic density. It catalyses the reaction S-ubiquitinyl-[E2 ubiquitin-conjugating enzyme]-L-cysteine + [acceptor protein]-L-lysine = [E2 ubiquitin-conjugating enzyme]-L-cysteine + N(6)-ubiquitinyl-[acceptor protein]-L-lysine.. It participates in protein modification; protein ubiquitination. Functionally, E3 ubiquitin-protein ligase which accepts ubiquitin from an E2 ubiquitin-conjugating enzyme in the form of a thioester and then directly transfers the ubiquitin to targeted substrates. Ubiquitinates BCKDK and targets it for degradation, thereby regulating various metabolic processes. Involved in the positive regulation of neurite branching in hippocampal neurons and the control of neuronal spine number and morphology, through the ubiquitination of PPP3CC. The polypeptide is Ubiquitin-protein ligase E3B (UBE3B) (Homo sapiens (Human)).